The primary structure comprises 261 residues: Ethanolamine ammonia-lyase small subunit (261 aa).

Adenosylcob(III)alamin is bound by residues Val158, Glu179, and Cys208.

The protein belongs to the EutC family. The basic unit is a heterodimer which dimerizes to form tetramers. The heterotetramers trimerize; 6 large subunits form a core ring with 6 small subunits projecting outwards. Requires adenosylcob(III)alamin as cofactor.

It is found in the bacterial microcompartment. It catalyses the reaction ethanolamine = acetaldehyde + NH4(+). The protein operates within amine and polyamine degradation; ethanolamine degradation. Catalyzes the deamination of various vicinal amino-alcohols to oxo compounds. Allows this organism to utilize ethanolamine as the sole source of nitrogen and carbon in the presence of external vitamin B12. In Bradyrhizobium diazoefficiens (strain JCM 10833 / BCRC 13528 / IAM 13628 / NBRC 14792 / USDA 110), this protein is Ethanolamine ammonia-lyase small subunit.